Reading from the N-terminus, the 552-residue chain is Sensor histidine kinase DpiB (552 aa).

Residues 1–21 (MLQLNENKQFAFFQRLAFPLR) are Cytoplasmic-facing. A helical membrane pass occupies residues 22–42 (IFLLILVFSIFVIAALAQYFT). Topologically, residues 43–182 (ASFEDYLTLH…DSWRAEFLLP (140 aa)) are periplasmic. The chain crosses the membrane as a helical span at residues 183–203 (MAGVFVVLLGILMLLSWFLAA). The Cytoplasmic segment spans residues 204 to 552 (HIRRQMMGME…NDSSINPIDR (349 aa)). The region spanning 222 to 292 (RQQEALFSSV…IDEKRQDVVA (71 aa)) is the PAS domain. The region spanning 344-541 (TLRHEHLNWM…LFSIYIPKVK (198 aa)) is the Histidine kinase domain. A Phosphohistidine; by autocatalysis modification is found at His347.

Autophosphorylated.

The protein resides in the cell inner membrane. It catalyses the reaction ATP + protein L-histidine = ADP + protein N-phospho-L-histidine.. With respect to regulation, autophosphorylation is induced in vitro by dithiothreitol (DTT). Its function is as follows. Member of the two-component regulatory system DpiA/DpiB, which is essential for expression of citrate-specific fermentation genes and genes involved in plasmid inheritance. Could be involved in response to both the presence of citrate and external redox conditions. Functions as a sensor kinase that phosphorylates DpiA in the presence of citrate. This is Sensor histidine kinase DpiB (dpiB) from Escherichia coli (strain K12).